The chain runs to 451 residues: Tubulin alpha-1A chain (451 aa).

GTP-binding residues include Gly-10, Gln-11, Ala-12, and Gln-15. The residue at position 40 (Lys-40) is an N6-acetyllysine. The GTP site is built by Glu-71, Ala-99, Ser-140, Gly-143, Gly-144, Thr-145, Gly-146, Thr-179, Glu-183, Asn-206, Tyr-224, Asn-228, and Leu-252. Glu-71 serves as a coordination point for Mg(2+). Glu-254 is an active-site residue. At Tyr-282 the chain carries 3'-nitrotyrosine. The residue at position 439 (Ser-439) is a Phosphoserine. 5-glutamyl polyglutamate is present on residues Glu-443 and Glu-445. Tyr-451 bears the 3'-nitrotyrosine mark.

This sequence belongs to the tubulin family. Heterodimer of alpha- and beta-tubulin. A typical microtubule is a hollow water-filled tube with an outer diameter of 25 nm and an inner diameter of 15 nM. Alpha-beta heterodimers associate head-to-tail to form protofilaments running lengthwise along the microtubule wall with the beta-tubulin subunit facing the microtubule plus end conferring a structural polarity. Microtubules usually have 13 protofilaments but different protofilament numbers can be found in some organisms and specialized cells. Interacts with gamma-tubulin; the interaction allows microtubules to nucleate from the gamma-tubulin ring complex (gTuRC). Nascent microtubule interacts (via alpha-tubulin MREC motif) with TTC5/STRAP; this interaction may result in tubulin mRNA-targeted degradation. Component of sperm flagellar doublet microtubules. Mg(2+) serves as cofactor. In terms of processing, some glutamate residues at the C-terminus are polyglycylated, resulting in polyglycine chains on the gamma-carboxyl group. Glycylation is mainly limited to tubulin incorporated into axonemes (cilia and flagella) whereas glutamylation is prevalent in neuronal cells, centrioles, axonemes, and the mitotic spindle. Both modifications can coexist on the same protein on adjacent residues, and lowering polyglycylation levels increases polyglutamylation, and reciprocally. Cilia and flagella glycylation is required for their stability and maintenance. Flagella glycylation controls sperm motility. Some glutamate residues at the C-terminus are polyglutamylated, resulting in polyglutamate chains on the gamma-carboxyl group. Polyglutamylation plays a key role in microtubule severing by spastin (SPAST). SPAST preferentially recognizes and acts on microtubules decorated with short polyglutamate tails: severing activity by SPAST increases as the number of glutamates per tubulin rises from one to eight, but decreases beyond this glutamylation threshold. Glutamylation is also involved in cilia motility. Post-translationally, acetylation of alpha chains at Lys-40 is located inside the microtubule lumen. This modification has been correlated with increased microtubule stability, intracellular transport and ciliary assembly. In terms of processing, methylation of alpha chains at Lys-40 is found in mitotic microtubules and is required for normal mitosis and cytokinesis contributing to genomic stability. Nitration of Tyr-451 is irreversible and interferes with normal dynein intracellular distribution. Post-translationally, undergoes a tyrosination/detyrosination cycle, the cyclic removal and re-addition of a C-terminal tyrosine residue by the enzymes tubulin tyrosine carboxypeptidase (MATCAP1, VASH1 or VASH2) and tubulin tyrosine ligase (TTL), respectively. In terms of processing, tyrosination promotes microtubule interaction with CAP-Gly domain-containing proteins such as CLIP1, CLIP2 and DCTN1. Tyrosination regulates the initiation of dynein-dynactin motility via interaction with DCTN1, which brings the dynein-dynactin complex into contact with microtubules. In neurons, tyrosinated tubulins mediate the initiation of retrograde vesicle transport. Detyrosination is involved in metaphase plate congression by guiding chromosomes during mitosis: detyrosination promotes interaction with CENPE, promoting pole-proximal transport of chromosomes toward the equator. Detyrosination increases microtubules-dependent mechanotransduction in dystrophic cardiac and skeletal muscle. In cardiomyocytes, detyrosinated microtubules are required to resist to contractile compression during contraction: detyrosination promotes association with desmin (DES) at force-generating sarcomeres, leading to buckled microtubules and mechanical resistance to contraction.

It is found in the cytoplasm. Its subcellular location is the cytoskeleton. It localises to the flagellum axoneme. The enzyme catalyses GTP + H2O = GDP + phosphate + H(+). Tubulin is the major constituent of microtubules, protein filaments consisting of alpha- and beta-tubulin heterodimers. Microtubules grow by the addition of GTP-tubulin dimers to the microtubule end, where a stabilizing cap forms. Below the cap, tubulin dimers are in GDP-bound state, owing to GTPase activity of alpha-tubulin. This chain is Tubulin alpha-1A chain (TUBA1A), found in Sus scrofa (Pig).